Reading from the N-terminus, the 435-residue chain is 3-phosphoshikimate 1-carboxyvinyltransferase (435 aa).

Residues Lys-23, Ser-24, and Arg-28 each contribute to the 3-phosphoshikimate site. Lys-23 is a phosphoenolpyruvate binding site. Residues Gly-97 and Arg-125 each contribute to the phosphoenolpyruvate site. The 3-phosphoshikimate site is built by Ser-170, Ser-171, Gln-172, Ser-198, Asp-315, Asn-338, and Lys-342. Residue Gln-172 coordinates phosphoenolpyruvate. Asp-315 acts as the Proton acceptor in catalysis. Arg-346, Arg-388, and Lys-413 together coordinate phosphoenolpyruvate.

The protein belongs to the EPSP synthase family. As to quaternary structure, monomer.

Its subcellular location is the cytoplasm. It catalyses the reaction 3-phosphoshikimate + phosphoenolpyruvate = 5-O-(1-carboxyvinyl)-3-phosphoshikimate + phosphate. It functions in the pathway metabolic intermediate biosynthesis; chorismate biosynthesis; chorismate from D-erythrose 4-phosphate and phosphoenolpyruvate: step 6/7. In terms of biological role, catalyzes the transfer of the enolpyruvyl moiety of phosphoenolpyruvate (PEP) to the 5-hydroxyl of shikimate-3-phosphate (S3P) to produce enolpyruvyl shikimate-3-phosphate and inorganic phosphate. The chain is 3-phosphoshikimate 1-carboxyvinyltransferase from Buchnera aphidicola subsp. Cinara cedri (strain Cc).